Consider the following 158-residue polypeptide: NAD(P)H-quinone oxidoreductase subunit J, chloroplastic (158 aa).

This sequence belongs to the complex I 30 kDa subunit family. As to quaternary structure, NDH is composed of at least 16 different subunits, 5 of which are encoded in the nucleus.

It localises to the plastid. Its subcellular location is the chloroplast thylakoid membrane. It carries out the reaction a plastoquinone + NADH + (n+1) H(+)(in) = a plastoquinol + NAD(+) + n H(+)(out). The catalysed reaction is a plastoquinone + NADPH + (n+1) H(+)(in) = a plastoquinol + NADP(+) + n H(+)(out). Its function is as follows. NDH shuttles electrons from NAD(P)H:plastoquinone, via FMN and iron-sulfur (Fe-S) centers, to quinones in the photosynthetic chain and possibly in a chloroplast respiratory chain. The immediate electron acceptor for the enzyme in this species is believed to be plastoquinone. Couples the redox reaction to proton translocation, and thus conserves the redox energy in a proton gradient. This is NAD(P)H-quinone oxidoreductase subunit J, chloroplastic from Olimarabidopsis pumila (Dwarf rocket).